A 192-amino-acid polypeptide reads, in one-letter code: Ras-like protein RAS2 (192 aa).

A GTP-binding site is contributed by 15–22 (GGGGVGKS). Residues 37 to 45 (YDPTIEDSY) carry the Effector region motif. Residues 62 to 66 (DTAGQ) and 121 to 124 (NKSD) each bind GTP. C189 is subject to Cysteine methyl ester. C189 carries S-geranylgeranyl cysteine lipidation. The propeptide at 190–192 (IVL) is removed in mature form.

The protein belongs to the small GTPase superfamily. Ras family.

It localises to the cell membrane. It catalyses the reaction GTP + H2O = GDP + phosphate + H(+). Its activity is regulated as follows. Alternates between an inactive form bound to GDP and an active form bound to GTP. Activated by a guanine nucleotide-exchange factor (GEF) and inactivated by a GTPase-activating protein (GAP). Functionally, ras proteins bind GDP/GTP and possess intrinsic GTPase activity. This chain is Ras-like protein RAS2 (RAS2), found in Hydra vulgaris (Hydra).